We begin with the raw amino-acid sequence, 567 residues long: Probable E3 ubiquitin-protein ligase ARI8 (567 aa).

The interval 1–27 (MEADDDFYSGTENYSDYADSDEDDADG) is disordered. The segment covering 18–27 (ADSDEDDADG) has biased composition (acidic residues). Positions 124 to 337 (GELDCGICFE…GGFYACNRYE (214 aa)) are TRIAD supradomain. 18 residues coordinate Zn(2+): Cys128, Cys131, Cys145, His147, Cys150, Cys153, Cys173, Cys178, Cys217, Cys222, Cys239, Cys241, Cys246, Cys249, His254, Cys259, Cys286, and Cys289. The RING-type 1 zinc-finger motif lies at 128-178 (CGICFETFLSDKLHAAACGHPFCDSCWEGYITTAINDGPGCLTLRCPDPSC). An IBR-type zinc finger spans residues 197–259 (QKYTSYFVRS…AEEAHRPVDC (63 aa)). The RING-type 2; atypical zinc-finger motif lies at 286-316 (CPKCKRPIEKNQGCMHITCTPPCKFEFCWLC). Residue Cys299 is part of the active site. Residues Cys304, Cys308, Cys313, Cys316, His323, and Cys333 each contribute to the Zn(2+) site. The disordered stretch occupies residues 514-543 (DAYDRTSSSKSLGGKTKGSSSKASSSDSSH). A compositionally biased stretch (low complexity) spans 521–542 (SSKSLGGKTKGSSSKASSSDSS). A RanBP2-type zinc finger spans residues 540–567 (DSSHWPCEYCTYVNPRSTTICQMCEHGR).

This sequence belongs to the RBR family. Ariadne subfamily. Zn(2+) serves as cofactor. Ubiquitous.

The catalysed reaction is [E2 ubiquitin-conjugating enzyme]-S-ubiquitinyl-L-cysteine + [acceptor protein]-L-lysine = [E2 ubiquitin-conjugating enzyme]-L-cysteine + [acceptor protein]-N(6)-ubiquitinyl-L-lysine.. It functions in the pathway protein modification; protein ubiquitination. Its function is as follows. Might act as an E3 ubiquitin-protein ligase, or as part of E3 complex, which accepts ubiquitin from specific E2 ubiquitin-conjugating enzymes and then transfers it to substrates. This is Probable E3 ubiquitin-protein ligase ARI8 (ARI8) from Arabidopsis thaliana (Mouse-ear cress).